The sequence spans 166 residues: Phospholipase A2 inhibitor clone 11 (166 aa).

An N-terminal signal peptide occupies residues 1–19 (MRLILLSGLLLLGIFLANG). The C-type lectin domain occupies 46–161 (LKGSFLIVHK…CDDNLLVVCE (116 aa)). Intrachain disulfides connect cysteine 83–cysteine 160 and cysteine 138–cysteine 152. The N-linked (GlcNAc...) asparagine glycan is linked to asparagine 122.

Belongs to the alpha-type phospholipase A2 inhibitor family. Homotrimer; non-covalently linked. In terms of tissue distribution, expressed by the liver.

Its subcellular location is the secreted. This phospholipase A2 inhibitor binds directly phospholipase A2 in the presence or absence of calcium. The protein is Phospholipase A2 inhibitor clone 11 of Bothrops neuwiedi (Neuwied's lancehead).